The following is a 37-amino-acid chain: Cytochrome b6-f complex subunit 5 (37 aa).

A helical membrane pass occupies residues 5–25; it reads LLSGIVLGLIVVTLAGLFYAA.

This sequence belongs to the PetG family. In terms of assembly, the 4 large subunits of the cytochrome b6-f complex are cytochrome b6, subunit IV (17 kDa polypeptide, PetD), cytochrome f and the Rieske protein, while the 4 small subunits are PetG, PetL, PetM and PetN. The complex functions as a dimer.

The protein resides in the cellular thylakoid membrane. Component of the cytochrome b6-f complex, which mediates electron transfer between photosystem II (PSII) and photosystem I (PSI), cyclic electron flow around PSI, and state transitions. PetG is required for either the stability or assembly of the cytochrome b6-f complex. The protein is Cytochrome b6-f complex subunit 5 of Anabaena variabilis.